A 446-amino-acid polypeptide reads, in one-letter code: Protein IQ-DOMAIN 19 (446 aa).

The segment at 93–140 (IPGTPKEKRRWSFRRSSATGPPPPACAITLKDSPPPPPPPPPPPPLQQ) is disordered. Residues 125–139 (SPPPPPPPPPPPPLQ) show a composition bias toward pro residues. IQ domains follow at residues 163-191 (EEFA…GLVK) and 192-214 (LQAL…CMQA). Residues 214–231 (ALITLQAKAREQRIRMIG) are calmodulin-binding. Over residues 332-345 (QSSKAKARSQSAPK) the composition is skewed to low complexity. The interval 332–398 (QSSKAKARSQ…TAKESQQHHH (67 aa)) is disordered. The span at 379–392 (QRSSSQLGSNTAKE) shows a compositional bias: polar residues.

This sequence belongs to the IQD family. Binds to multiple calmodulin (CaM) in the presence of Ca(2+) and CaM-like proteins.

Its subcellular location is the cytoplasm. The protein resides in the cytoskeleton. It localises to the cell membrane. May be involved in cooperative interactions with calmodulins or calmodulin-like proteins. Recruits calmodulin proteins to microtubules, thus being a potential scaffold in cellular signaling and trafficking. Acts as a positive regulator of trichome branch initiation. May associate with nucleic acids and regulate gene expression at the transcriptional or post-transcriptional level. This is Protein IQ-DOMAIN 19 from Arabidopsis thaliana (Mouse-ear cress).